We begin with the raw amino-acid sequence, 837 residues long: Tuftelin-interacting protein 11 (837 aa).

2 stretches are compositionally biased toward basic and acidic residues: residues 1–13 (MSLSHLYRDGEGR) and 53–64 (VWAERDSDDERP). Disordered regions lie at residues 1-21 (MSLSHLYRDGEGRIDDDDDER), 53-72 (VWAERDSDDERPSFGGKRAR), and 85-133 (LKKG…KGFA). The segment at 1–50 (MSLSHLYRDGEGRIDDDDDERENFEITDWDLQNEFNPNRQRHWQTKEEAT) is required for interaction with DHX15. Phosphoserine is present on residues S2, S59, and S98. Positions 91-102 (EEAELEDSDDEE) are enriched in acidic residues. The span at 103–116 (KPVKQDDFPKDFGP) shows a compositional bias: basic and acidic residues. Residue S144 is modified to Phosphoserine. The 47-residue stretch at 149–195 (TKGIGQKLLQKMGYVPGRGLGKNAQGIINPIEAKQRKGKGAVGAYGS) folds into the G-patch domain. Residues 179 to 236 (IEAKQRKGKGAVGAYGSERTTQSMQDFPVVDSEEEAEEEFQKELSQWRKDPSGSKKKP) form a disordered region. S210 carries the post-translational modification Phosphoserine. The span at 217–231 (EFQKELSQWRKDPSG) shows a compositional bias: basic and acidic residues. The Nuclear localization signal motif lies at 700–705 (VKDKFN). The interval 710–734 (IMNRAVSSNVGAYMQPGARENIAYL) is required for nuclear speckle localization.

The protein belongs to the TFP11/STIP family. As to quaternary structure, identified in the spliceosome C complex. Found in the Intron Large (IL) complex, a post-mRNA release spliceosomal complex containing the excised intron, U2, U5 and U6 snRNPs, and splicing factors. Interacts with TUFT1. Interacts with DHX15; indicative for a recruitment of DHX15 to the IL complex. Interacts with GCFC2.

The protein resides in the cytoplasm. It is found in the nucleus. In terms of biological role, involved in pre-mRNA splicing, specifically in spliceosome disassembly during late-stage splicing events. Intron turnover seems to proceed through reactions in two lariat-intron associated complexes termed Intron Large (IL) and Intron Small (IS). In cooperation with DHX15 seems to mediate the transition of the U2, U5 and U6 snRNP-containing IL complex to the snRNP-free IS complex leading to efficient debranching and turnover of excised introns. May play a role in the differentiation of ameloblasts and odontoblasts or in the forming of the enamel extracellular matrix. The chain is Tuftelin-interacting protein 11 (TFIP11) from Pongo abelii (Sumatran orangutan).